A 91-amino-acid chain; its full sequence is UPF0147 protein APE_2336a (91 aa).

Belongs to the UPF0147 family.

The sequence is that of UPF0147 protein APE_2336a from Aeropyrum pernix (strain ATCC 700893 / DSM 11879 / JCM 9820 / NBRC 100138 / K1).